We begin with the raw amino-acid sequence, 46 residues long: Antimicrobial peptide eNAP-1 (46 aa).

Cystine bridges form between cysteine 4–cysteine 16 and cysteine 10–cysteine 26.

It belongs to the granulin family.

It is found in the secreted. Functionally, has antimicrobial activity against Gram-negative and Gram-positive bacteria. The protein is Antimicrobial peptide eNAP-1 of Equus caballus (Horse).